The sequence spans 482 residues: Isoxanthopterin deaminase (482 aa).

2 residues coordinate Zn(2+): His-74 and His-76. Position 79 (Gln-79) interacts with substrate. A Zn(2+)-binding site is contributed by His-246. Substrate is bound by residues Glu-249 and His-283. Positions 283 and 334 each coordinate Zn(2+).

It belongs to the metallo-dependent hydrolases superfamily. ATZ/TRZ family. The cofactor is Zn(2+).

The enzyme catalyses a 2-amino-4-hydroxypteridine + H2O + H(+) = a 2,4-dihydroxypteridine + NH4(+). This Unknown prokaryotic organism protein is Isoxanthopterin deaminase.